A 180-amino-acid polypeptide reads, in one-letter code: NADH-ubiquinone oxidoreductase chain 5 (180 aa).

The chain crosses the membrane as a helical span at residues 131–148; that stretch reads VYHYAFAMLLGSTPFVTF.

Belongs to the complex I subunit 5 family.

It is found in the mitochondrion inner membrane. It catalyses the reaction a ubiquinone + NADH + 5 H(+)(in) = a ubiquinol + NAD(+) + 4 H(+)(out). Functionally, core subunit of the mitochondrial membrane respiratory chain NADH dehydrogenase (Complex I) that is believed to belong to the minimal assembly required for catalysis. Complex I functions in the transfer of electrons from NADH to the respiratory chain. The immediate electron acceptor for the enzyme is believed to be ubiquinone. This Zea mays (Maize) protein is NADH-ubiquinone oxidoreductase chain 5 (ND5).